Consider the following 322-residue polypeptide: Tyrosine recombinase XerC (322 aa).

The segment at 1–25 is disordered; the sequence is MPEAAPPVADARGSSPTATTGPGAD. A compositionally biased stretch (low complexity) spans 16–25; sequence PTATTGPGAD. Residues 25–111 enclose the Core-binding (CB) domain; it reads DATLSAVEPF…ACRSYYAWLL (87 aa). Residues 132–309 enclose the Tyr recombinase domain; it reads KLPQVLDADE…DFQHLAKVYD (178 aa). Residues Arg-171, Lys-195, His-261, Arg-264, and His-287 contribute to the active site. Tyr-296 acts as the O-(3'-phospho-DNA)-tyrosine intermediate in catalysis.

This sequence belongs to the 'phage' integrase family. XerC subfamily. In terms of assembly, forms a cyclic heterotetrameric complex composed of two molecules of XerC and two molecules of XerD.

The protein resides in the cytoplasm. In terms of biological role, site-specific tyrosine recombinase, which acts by catalyzing the cutting and rejoining of the recombining DNA molecules. The XerC-XerD complex is essential to convert dimers of the bacterial chromosome into monomers to permit their segregation at cell division. It also contributes to the segregational stability of plasmids. This is Tyrosine recombinase XerC from Xanthomonas campestris pv. campestris (strain 8004).